The following is a 246-amino-acid chain: Probable transcriptional regulatory protein TM1040_1893 (246 aa).

The disordered stretch occupies residues 1–21 (MAGHSKWANIQHRKGRQDAAR).

Belongs to the TACO1 family.

The protein resides in the cytoplasm. The protein is Probable transcriptional regulatory protein TM1040_1893 of Ruegeria sp. (strain TM1040) (Silicibacter sp.).